The chain runs to 960 residues: Importin alpha re-exporter (960 aa).

HEAT repeat units lie at residues 1-33 (MSDL…LETQ), 34-73 (DGFG…VDEN), 74-120 (GNHL…FPDR), 121-157 (WPTL…WRPL), 158-220 (FRSD…NCQD), 221-278 (IPEF…TRYE), 279-323 (DVFG…TRIP), 324-392 (KYFE…KEKN), 393-445 (EVLV…GVSS), 446-489 (TNNL…RNQL), 490-528 (TKAQ…TIRE), 529-586 (SNTS…TSED), 587-630 (SIQP…LNYT), 631-674 (QRQN…QSAT), 675-716 (IPES…SSIF), 717-751 (PDLV…LLID), 752-794 (MNRL…NKLG), and 795-826 (SDFL…PTIG). Residues 23–96 (SERNLRQLET…KKEIVPLMIS (74 aa)) form the Importin N-terminal domain. Residues 366-381 (RRDLEGSDTDTRRRAC) carry the Nuclear localization signal motif. The HEAT 19; with insert repeat unit spans residues 827-928 (NLLDRKIALI…RLYVAEALNK (102 aa)). An HEAT 20 repeat occupies 929–960 (YNAISGNTFLNTILPQLTQENQVKLNQLLVGN).

Belongs to the XPO2/CSE1 family. Binds with high affinity to SRP1 only in the presence of RanGTP. The complex is dissociated by the RanGTP-binding protein YRB1.

The protein resides in the cytoplasm. It is found in the nucleus. Export receptor for importin alpha (SRP1). Mediates importin-alpha re-export from the nucleus to the cytoplasm after import substrates have been released into the nucleoplasm. The chain is Importin alpha re-exporter (CSE1) from Saccharomyces cerevisiae (strain ATCC 204508 / S288c) (Baker's yeast).